Reading from the N-terminus, the 329-residue chain is GTP 3',8-cyclase (329 aa).

The Radical SAM core domain maps to 8–234; that stretch reads AFARKFYYLR…QLRQRSDGPA (227 aa). Arg-17 contributes to the GTP binding site. 2 residues coordinate [4Fe-4S] cluster: Cys-24 and Cys-28. Tyr-30 is an S-adenosyl-L-methionine binding site. Cys-31 is a binding site for [4Fe-4S] cluster. Residue Arg-68 coordinates GTP. Gly-72 lines the S-adenosyl-L-methionine pocket. Thr-99 is a binding site for GTP. Position 123 (Ser-123) interacts with S-adenosyl-L-methionine. Residue Lys-160 coordinates GTP. Met-194 lines the S-adenosyl-L-methionine pocket. 2 residues coordinate [4Fe-4S] cluster: Cys-257 and Cys-260. 262–264 provides a ligand contact to GTP; the sequence is RLR. Cys-274 is a [4Fe-4S] cluster binding site.

This sequence belongs to the radical SAM superfamily. MoaA family. In terms of assembly, monomer and homodimer. [4Fe-4S] cluster serves as cofactor.

The enzyme catalyses GTP + AH2 + S-adenosyl-L-methionine = (8S)-3',8-cyclo-7,8-dihydroguanosine 5'-triphosphate + 5'-deoxyadenosine + L-methionine + A + H(+). It functions in the pathway cofactor biosynthesis; molybdopterin biosynthesis. In terms of biological role, catalyzes the cyclization of GTP to (8S)-3',8-cyclo-7,8-dihydroguanosine 5'-triphosphate. This is GTP 3',8-cyclase from Salmonella newport (strain SL254).